A 218-amino-acid chain; its full sequence is Elongation factor Ts (218 aa).

An involved in Mg(2+) ion dislocation from EF-Tu region spans residues 82 to 85 (TDFV).

The protein belongs to the EF-Ts family.

The protein localises to the cytoplasm. Functionally, associates with the EF-Tu.GDP complex and induces the exchange of GDP to GTP. It remains bound to the aminoacyl-tRNA.EF-Tu.GTP complex up to the GTP hydrolysis stage on the ribosome. The protein is Elongation factor Ts of Prochlorococcus marinus (strain MIT 9301).